A 295-amino-acid chain; its full sequence is Movement protein BC1 (295 aa).

This sequence belongs to the begomovirus movement protein BC1 family. In terms of assembly, binds to dimeric supercoiled plasmid DNA. In terms of processing, phosphorylated.

It localises to the host cell membrane. The protein resides in the host microsome membrane. The protein localises to the host endoplasmic reticulum membrane. In terms of biological role, transports viral genome to neighboring plant cells directly through plasmosdesmata, without any budding. The movement protein allows efficient cell to cell propagation, by bypassing the host cell wall barrier. Begomovirus genome is shuttled out of nucleus by Nuclear shuttle protein (NSP) and the movement protein transports the DNA-NSP complex to cell plasmodesmata and facilitates further movement across the cell wall. This Brassica oleracea (Wild cabbage) protein is Movement protein BC1.